Here is a 262-residue protein sequence, read N- to C-terminus: tRNA pseudouridine synthase A (262 aa).

The active-site Nucleophile is the D51. Y109 contacts substrate.

This sequence belongs to the tRNA pseudouridine synthase TruA family. Homodimer.

The enzyme catalyses uridine(38/39/40) in tRNA = pseudouridine(38/39/40) in tRNA. In terms of biological role, formation of pseudouridine at positions 38, 39 and 40 in the anticodon stem and loop of transfer RNAs. This chain is tRNA pseudouridine synthase A, found in Legionella pneumophila (strain Lens).